A 459-amino-acid chain; its full sequence is uncharacterized protein (459 aa).

One can recognise a TRAM domain in the interval Pro-5–Lys-63. Positions 76, 82, 85, and 166 each coordinate [4Fe-4S] cluster. Residues Gln-290, Tyr-319, Asp-340, and Asp-388 each coordinate S-adenosyl-L-methionine. The Nucleophile role is filled by Cys-415.

Belongs to the class I-like SAM-binding methyltransferase superfamily. RNA M5U methyltransferase family.

This is an uncharacterized protein from Listeria monocytogenes serotype 4b (strain F2365).